Here is a 119-residue protein sequence, read N- to C-terminus: Ribosome-binding factor A (119 aa).

The protein belongs to the RbfA family. In terms of assembly, monomer. Binds 30S ribosomal subunits, but not 50S ribosomal subunits or 70S ribosomes.

The protein localises to the cytoplasm. Its function is as follows. One of several proteins that assist in the late maturation steps of the functional core of the 30S ribosomal subunit. Associates with free 30S ribosomal subunits (but not with 30S subunits that are part of 70S ribosomes or polysomes). Required for efficient processing of 16S rRNA. May interact with the 5'-terminal helix region of 16S rRNA. This chain is Ribosome-binding factor A, found in Pelodictyon phaeoclathratiforme (strain DSM 5477 / BU-1).